A 161-amino-acid polypeptide reads, in one-letter code: MPSFDIVSELDQHELTNAVDQANKEVTTRYDFKGTDSSFELKESMVTLKTESEFQLQQMLNILIEKANRRGIDVKCMEVKDPEIQLKTAKQVVEMKEGLDAPLAKKIIKAIKESKIKVQAAKQEDTIRVTGKKRDDLQAVMQLLKGMEDLDMPLQFNNFRD.

Belongs to the YajQ family.

Functionally, nucleotide-binding protein. This Hydrogenovibrio crunogenus (strain DSM 25203 / XCL-2) (Thiomicrospira crunogena) protein is Nucleotide-binding protein Tcr_1902.